The primary structure comprises 1179 residues: Integrin alpha-1 (1179 aa).

The N-terminal stretch at 1–28 (MAPRPRARPGVAVACCWLLTVVLRCCVS) is a signal peptide. The Extracellular portion of the chain corresponds to 29 to 1141 (FNVDVKNSMT…SKDGLPGRVP (1113 aa)). One copy of the FG-GAP 1 repeat lies at 30-91 (NVDVKNSMTF…CPVGRGESLP (62 aa)). Asparagine 74 is a glycosylation site (N-linked (GlcNAc...) asparagine). A disulfide bridge connects residues cysteine 82 and cysteine 92. N-linked (GlcNAc...) asparagine glycosylation is found at asparagine 100, asparagine 105, asparagine 112, asparagine 217, asparagine 317, asparagine 341, asparagine 402, asparagine 418, and asparagine 460. An FG-GAP 2 repeat occupies 101-160 (TSIPNVTEVKENMTFGSTLVTNPNGGFLACGPLYAYRCGHLHYTTGICSDVSPTFQVVNS). The VWFA domain maps to 161–360 (IAPVQECSTQ…IVKTLGERIF (200 aa)). The stretch at 365-417 (TADQSAASFEMEMSQTGFSAHYSQDWVMLGAVGAYDWNGTVVMQKASQIIIPR) is one FG-GAP 3 repeat. FG-GAP repeat units follow at residues 422–475 (NVES…DGNI), 476–538 (KILQ…RFEY), 557–615 (SCTT…TIRK), and 619–679 (QRIP…FEPN). Residues aspartate 498, aspartate 500, aspartate 502, and aspartate 506 each contribute to the Ca(2+) site. Residue asparagine 532 is glycosylated (N-linked (GlcNAc...) asparagine). The Ca(2+) site is built by aspartate 580, asparagine 582, aspartate 584, aspartate 588, aspartate 642, asparagine 644, aspartate 646, and aspartate 650. Cysteine 688 and cysteine 697 form a disulfide bridge. Asparagine 699, asparagine 748, and asparagine 780 each carry an N-linked (GlcNAc...) asparagine glycan. An intrachain disulfide couples cysteine 703 to cysteine 756. A disulfide bridge links cysteine 808 with cysteine 814. Residues asparagine 840, asparagine 883, asparagine 908, asparagine 915, asparagine 939, asparagine 966, asparagine 974, and asparagine 1008 are each glycosylated (N-linked (GlcNAc...) asparagine). Cysteine 878 and cysteine 886 are oxidised to a cystine. Disulfide bonds link cysteine 1030–cysteine 1062 and cysteine 1065–cysteine 1072. Residues asparagine 1073, asparagine 1083, asparagine 1102, and asparagine 1113 are each glycosylated (N-linked (GlcNAc...) asparagine). Residues 1142-1164 (LWVILLSAFAGLLLLMLLILALW) traverse the membrane as a helical segment. Residues 1165 to 1179 (KIGFFKRPLKKKMEK) lie on the Cytoplasmic side of the membrane. Residues 1167–1171 (GFFKR) carry the GFFKR motif motif.

This sequence belongs to the integrin alpha chain family. In terms of assembly, heterodimer of an alpha and a beta subunit. Alpha-1 associates with beta-1. Interacts with RAB21. Interacts (via cytoplasmic domain) with PTPN2; activates PTPN2 phosphatase activity towards EGFR and negatively regulates EGF signaling.

Its subcellular location is the membrane. Functionally, integrin alpha-1/beta-1 is a receptor for laminin and collagen. It recognizes the proline-hydroxylated sequence G-F-P-G-E-R in collagen. Involved in anchorage-dependent, negative regulation of EGF-stimulated cell growth. This is Integrin alpha-1 (ITGA1) from Homo sapiens (Human).